The chain runs to 449 residues: Asparagine--tRNA ligase (449 aa).

Belongs to the class-II aminoacyl-tRNA synthetase family. Homodimer.

It is found in the cytoplasm. The enzyme catalyses tRNA(Asn) + L-asparagine + ATP = L-asparaginyl-tRNA(Asn) + AMP + diphosphate + H(+). The polypeptide is Asparagine--tRNA ligase (Mesomycoplasma hyopneumoniae (strain 232) (Mycoplasma hyopneumoniae)).